The following is a 212-amino-acid chain: GTP cyclohydrolase 1 (212 aa).

Zn(2+)-binding residues include cysteine 103, histidine 106, and cysteine 174.

Belongs to the GTP cyclohydrolase I family. As to quaternary structure, toroid-shaped homodecamer, composed of two pentamers of five dimers.

The enzyme catalyses GTP + H2O = 7,8-dihydroneopterin 3'-triphosphate + formate + H(+). It participates in cofactor biosynthesis; 7,8-dihydroneopterin triphosphate biosynthesis; 7,8-dihydroneopterin triphosphate from GTP: step 1/1. This is GTP cyclohydrolase 1 from Caulobacter vibrioides (strain ATCC 19089 / CIP 103742 / CB 15) (Caulobacter crescentus).